A 470-amino-acid polypeptide reads, in one-letter code: Glutamate--tRNA ligase (470 aa).

A 'HIGH' region motif is present at residues 9–19 (PSPTGFLHVGG). A 'KMSKS' region motif is present at residues 236-240 (RLSKR). Residue K239 participates in ATP binding.

The protein belongs to the class-I aminoacyl-tRNA synthetase family. Glutamate--tRNA ligase type 1 subfamily. As to quaternary structure, monomer.

It is found in the cytoplasm. It carries out the reaction tRNA(Glu) + L-glutamate + ATP = L-glutamyl-tRNA(Glu) + AMP + diphosphate. Catalyzes the attachment of glutamate to tRNA(Glu) in a two-step reaction: glutamate is first activated by ATP to form Glu-AMP and then transferred to the acceptor end of tRNA(Glu). This chain is Glutamate--tRNA ligase, found in Legionella pneumophila (strain Corby).